The sequence spans 24 residues: Brevinin-1CSa (24 aa).

C18 and C24 are oxidised to a cystine.

Expressed by the skin glands.

It is found in the secreted. It localises to the target cell membrane. Antibacterial peptide. Has activity against the Gram-positive bacterium S.aureus (MIC=2 uM) and the Gram-negative bacterium E.coli (MIC=32 uM). Has a strong hemolytic activity (LC(50)=5 uM). The sequence is that of Brevinin-1CSa from Rana cascadae (Cascades frog).